Consider the following 204-residue polypeptide: Ribonuclease HII (204 aa).

The region spanning 8 to 197 (RLICGVDEAG…VRELLQNPPL (190 aa)) is the RNase H type-2 domain. Positions 14, 15, and 106 each coordinate a divalent metal cation.

Belongs to the RNase HII family. The cofactor is Mn(2+). Mg(2+) serves as cofactor.

It is found in the cytoplasm. The enzyme catalyses Endonucleolytic cleavage to 5'-phosphomonoester.. Functionally, endonuclease that specifically degrades the RNA of RNA-DNA hybrids. The chain is Ribonuclease HII from Azoarcus sp. (strain BH72).